Here is a 239-residue protein sequence, read N- to C-terminus: Lectin (239 aa).

N-linked (GlcNAc...) asparagine glycans are attached at residues Asn-17 and Asn-113.

This sequence belongs to the leguminous lectin family. As to quaternary structure, homodimer.

In terms of biological role, galactose and N-acetyllactosamine specific lectin. The protein is Lectin of Erythrina crista-galli (Cockspur coral tree).